We begin with the raw amino-acid sequence, 448 residues long: NK1 transcription factor-related protein 1 (448 aa).

A compositionally biased stretch (low complexity) spans M1 to P13. Disordered stretches follow at residues M1–T80, A115–A299, and K350–L397. Over residues A14–P30 the composition is skewed to pro residues. Low complexity-rich tracts occupy residues P62–P79 and A115–P129. A compositionally biased stretch (basic and acidic residues) spans P130–A139. Acidic residues predominate over residues S186–E203. The span at E205–R214 shows a compositional bias: basic and acidic residues. Gly residues-rich tracts occupy residues G215–C227 and P259–G270. Over residues T271–A280 the composition is skewed to low complexity. Positions P296 to N355 form a DNA-binding region, homeobox. Residues T364–G382 show a composition bias toward gly residues.

The protein belongs to the NK-1 homeobox family. In terms of tissue distribution, expressed in hemopoietic progenitor cells.

It is found in the nucleus. Functionally, may be required for the coordinated crosstalk of factors involved in the maintenance of energy homeostasis, possibly by regulating the transcription of specific factors involved in energy balance. The chain is NK1 transcription factor-related protein 1 from Homo sapiens (Human).